Reading from the N-terminus, the 306-residue chain is GTPase Era (306 aa).

Positions 14–181 (KSGFIGIIGR…LDELWKYLPE (168 aa)) constitute an Era-type G domain. A G1 region spans residues 22–29 (GRPNVGKS). 22–29 (GRPNVGKS) contacts GTP. Residues 48–52 (QTTRN) are G2. The tract at residues 69–72 (DTPG) is G3. GTP-binding positions include 69-73 (DTPGI) and 131-134 (NKID). The segment at 131 to 134 (NKID) is G4. The G5 stretch occupies residues 160-162 (ISA). The 79-residue stretch at 212–290 (THKEIPYSSA…FLELFVRVRK (79 aa)) folds into the KH type-2 domain.

Belongs to the TRAFAC class TrmE-Era-EngA-EngB-Septin-like GTPase superfamily. Era GTPase family. As to quaternary structure, monomer.

It is found in the cytoplasm. The protein resides in the cell inner membrane. An essential GTPase that binds both GDP and GTP, with rapid nucleotide exchange. Plays a role in 16S rRNA processing and 30S ribosomal subunit biogenesis and possibly also in cell cycle regulation and energy metabolism. The sequence is that of GTPase Era from Syntrophus aciditrophicus (strain SB).